The chain runs to 497 residues: Glycerol kinase (497 aa).

Residue threonine 13 coordinates ADP. Residues threonine 13, threonine 14, and serine 15 each contribute to the ATP site. Threonine 13 is a sn-glycerol 3-phosphate binding site. Arginine 17 provides a ligand contact to ADP. Arginine 83, glutamate 84, and tyrosine 135 together coordinate sn-glycerol 3-phosphate. Positions 83, 84, and 135 each coordinate glycerol. Position 231 is a phosphohistidine; by HPr (histidine 231). Position 245 (aspartate 245) interacts with sn-glycerol 3-phosphate. Residues aspartate 245 and glutamine 246 each coordinate glycerol. 2 residues coordinate ADP: threonine 267 and glycine 310. ATP is bound by residues threonine 267, glycine 310, glutamine 314, and glycine 411. Positions 411 and 415 each coordinate ADP.

Belongs to the FGGY kinase family. In terms of assembly, homotetramer and homodimer (in equilibrium). Post-translationally, the phosphoenolpyruvate-dependent sugar phosphotransferase system (PTS), including enzyme I, and histidine-containing protein (HPr) are required for the phosphorylation, which leads to the activation of the enzyme.

It catalyses the reaction glycerol + ATP = sn-glycerol 3-phosphate + ADP + H(+). The protein operates within polyol metabolism; glycerol degradation via glycerol kinase pathway; sn-glycerol 3-phosphate from glycerol: step 1/1. Its activity is regulated as follows. Activated by phosphorylation and inhibited by fructose 1,6-bisphosphate (FBP). Functionally, key enzyme in the regulation of glycerol uptake and metabolism. Catalyzes the phosphorylation of glycerol to yield sn-glycerol 3-phosphate. The sequence is that of Glycerol kinase from Halalkalibacterium halodurans (strain ATCC BAA-125 / DSM 18197 / FERM 7344 / JCM 9153 / C-125) (Bacillus halodurans).